We begin with the raw amino-acid sequence, 436 residues long: Xylose isomerase (436 aa).

Residues H100 and D103 contribute to the active site. Mg(2+)-binding residues include E231, E267, H270, D295, D306, D308, and D338.

It belongs to the xylose isomerase family. As to quaternary structure, homotetramer. The cofactor is Mg(2+).

The protein localises to the cytoplasm. The catalysed reaction is alpha-D-xylose = alpha-D-xylulofuranose. The sequence is that of Xylose isomerase from Ruegeria sp. (strain TM1040) (Silicibacter sp.).